A 216-amino-acid polypeptide reads, in one-letter code: V-type ATP synthase subunit D (216 aa).

The protein belongs to the V-ATPase D subunit family.

Functionally, produces ATP from ADP in the presence of a proton gradient across the membrane. This is V-type ATP synthase subunit D from Clostridium botulinum (strain ATCC 19397 / Type A).